Here is a 278-residue protein sequence, read N- to C-terminus: Myb/SANT-like DNA-binding domain-containing protein 1 (278 aa).

The segment at 1–27 (MVRGAGPGPSLSALSHPTGASGMAAAE) is disordered. Positions 44–129 (RNWTDAEMRG…PDWPYYLAID (86 aa)) constitute a Myb-like domain. Positions 138–168 (SCDGKLPDSQPPGPSTSQTEASLSPPAKSTP) are disordered.

The chain is Myb/SANT-like DNA-binding domain-containing protein 1 (MSANTD1) from Homo sapiens (Human).